We begin with the raw amino-acid sequence, 147 residues long: Hemoglobin subunit beta (147 aa).

Positions 3-147 (EWTDKERTII…VVSALGKQYH (145 aa)) constitute a Globin domain. Positions 64 and 93 each coordinate heme b.

Belongs to the globin family. In terms of assembly, heterotetramer of two alpha chains and two beta chains. In terms of tissue distribution, red blood cells.

Its function is as follows. Involved in oxygen transport from gills to the various peripheral tissues. The polypeptide is Hemoglobin subunit beta (Trematomus newnesi (Dusky notothen)).